Consider the following 269-residue polypeptide: Hydroxyethylthiazole kinase (269 aa).

Substrate is bound at residue methionine 45. 2 residues coordinate ATP: arginine 121 and threonine 167. Substrate is bound at residue glycine 194.

It belongs to the Thz kinase family. It depends on Mg(2+) as a cofactor.

The enzyme catalyses 5-(2-hydroxyethyl)-4-methylthiazole + ATP = 4-methyl-5-(2-phosphooxyethyl)-thiazole + ADP + H(+). Its pathway is cofactor biosynthesis; thiamine diphosphate biosynthesis; 4-methyl-5-(2-phosphoethyl)-thiazole from 5-(2-hydroxyethyl)-4-methylthiazole: step 1/1. Catalyzes the phosphorylation of the hydroxyl group of 4-methyl-5-beta-hydroxyethylthiazole (THZ). The polypeptide is Hydroxyethylthiazole kinase (Geobacillus sp. (strain WCH70)).